The chain runs to 411 residues: 2,3-bisphosphoglycerate-independent phosphoglycerate mutase (411 aa).

Positions 164–190 (VSSNDPKKEGVQPLTIRPGSDDPADAK) are disordered.

Belongs to the BPG-independent phosphoglycerate mutase family. A-PGAM subfamily.

The enzyme catalyses (2R)-2-phosphoglycerate = (2R)-3-phosphoglycerate. It participates in carbohydrate degradation; glycolysis; pyruvate from D-glyceraldehyde 3-phosphate: step 3/5. Its function is as follows. Catalyzes the interconversion of 2-phosphoglycerate and 3-phosphoglycerate. The sequence is that of 2,3-bisphosphoglycerate-independent phosphoglycerate mutase from Methanoculleus marisnigri (strain ATCC 35101 / DSM 1498 / JR1).